The chain runs to 252 residues: Protein BTG3 (252 aa).

Residues Val-138–Ser-163 form a disordered region.

This sequence belongs to the BTG family. In terms of tissue distribution, ubiquitous.

Functionally, overexpression impairs serum-induced cell cycle progression from the G0/G1 to S phase. The protein is Protein BTG3 (Btg3) of Mus musculus (Mouse).